A 253-amino-acid polypeptide reads, in one-letter code: Ribosomal RNA small subunit methyltransferase J (253 aa).

Residues 98–99 (RD), 114–115 (ER), 150–151 (SS), and Asp172 each bind S-adenosyl-L-methionine.

This sequence belongs to the methyltransferase superfamily. RsmJ family.

It is found in the cytoplasm. It carries out the reaction guanosine(1516) in 16S rRNA + S-adenosyl-L-methionine = N(2)-methylguanosine(1516) in 16S rRNA + S-adenosyl-L-homocysteine + H(+). In terms of biological role, specifically methylates the guanosine in position 1516 of 16S rRNA. The sequence is that of Ribosomal RNA small subunit methyltransferase J from Shewanella pealeana (strain ATCC 700345 / ANG-SQ1).